A 360-amino-acid polypeptide reads, in one-letter code: Mitogen-activated protein kinase 14 (360 aa).

Residue serine 2 is modified to N-acetylserine. Serine 2 is modified (phosphoserine). Threonine 16 carries the phosphothreonine modification. One can recognise a Protein kinase domain in the interval 24 to 308; it reads YQNLSPVGSG…AAQALAHAYF (285 aa). ATP-binding positions include 30-38 and lysine 53; that span reads VGSGAYGSV. Lysine 53 is modified (N6-acetyllysine). Aspartate 150 serves as the catalytic Proton acceptor. At lysine 152 the chain carries N6-acetyllysine. A Phosphothreonine modification is found at threonine 180. The TXY motif lies at 180–182; the sequence is TGY. Phosphotyrosine is present on tyrosine 182. Tyrosine 323 is subject to Phosphotyrosine; by ZAP70.

This sequence belongs to the protein kinase superfamily. CMGC Ser/Thr protein kinase family. MAP kinase subfamily. As to quaternary structure, component of a signaling complex containing at least AKAP13, PKN1, MAPK14, ZAK and MAP2K3. Within this complex, AKAP13 interacts directly with PKN1, which in turn recruits MAPK14, MAP2K3 and ZAK. Binds to a kinase interaction motif within the protein tyrosine phosphatase, PTPRR. This interaction retains MAPK14 in the cytoplasm and prevents nuclear accumulation. Interacts with SPAG9 and GADD45A. Interacts with CDC25B, CDC25C, DUSP1, DUSP10, DUSP16, NP60, SUPT20H and TAB1. Interacts with casein kinase II subunits CSNK2A1 and CSNK2B. Interacts with PPM1D. Interacts with CDK5RAP3; recruits PPM1D to MAPK14 and may regulate its dephosphorylation. Interacts with DUSP2; this interaction does not lead to catalytic activation of DUSP2 and dephosphrylation of MAPK14. It depends on Mg(2+) as a cofactor. Post-translationally, dually phosphorylated on Thr-180 and Tyr-182 by the MAP2Ks MAP2K3/MKK3, MAP2K4/MKK4 and MAP2K6/MKK6 in response to inflammatory cytokines, environmental stress or growth factors, which activates the enzyme. Dual phosphorylation can also be mediated by TAB1-mediated autophosphorylation. TCR engagement in T-cells also leads to Tyr-323 phosphorylation by ZAP70. Dephosphorylated and inactivated by DUPS1, DUSP10 and DUSP16. PPM1D also mediates dephosphorylation and inactivation of MAPK14. In terms of processing, acetylated at Lys-53 and Lys-152 by KAT2B and EP300. Acetylation at Lys-53 increases the affinity for ATP and enhances kinase activity. Lys-53 and Lys-152 are deacetylated by HDAC3. Ubiquitinated. Ubiquitination leads to degradation by the proteasome pathway.

It localises to the cytoplasm. It is found in the nucleus. It catalyses the reaction L-seryl-[protein] + ATP = O-phospho-L-seryl-[protein] + ADP + H(+). It carries out the reaction L-threonyl-[protein] + ATP = O-phospho-L-threonyl-[protein] + ADP + H(+). Its activity is regulated as follows. Activated by cell stresses such as DNA damage, heat shock, osmotic shock, anisomycin and sodium arsenite, as well as pro-inflammatory stimuli such as bacterial lipopolysaccharide (LPS) and interleukin-1. Activation occurs through dual phosphorylation of Thr-180 and Tyr-182 by either of two dual specificity kinases, MAP2K3/MKK3 or MAP2K6/MKK6, and potentially also MAP2K4/MKK4, as well as by TAB1-mediated autophosphorylation. MAPK14 phosphorylated on both Thr-180 and Tyr-182 is 10-20-fold more active than MAPK14 phosphorylated only on Thr-180, whereas MAPK14 phosphorylated on Tyr-182 alone is inactive. whereas Thr-180 is necessary for catalysis, Tyr-182 may be required for auto-activation and substrate recognition. Phosphorylated at Tyr-323 by ZAP70 in an alternative activation pathway in response to TCR signaling in T-cells. This alternative pathway is inhibited by GADD45A. Inhibited by dual specificity phosphatases, such as DUSP1, DUSP10, and DUSP16. Specifically inhibited by the binding of pyridinyl-imidazole compounds, which are cytokine-suppressive anti-inflammatory drugs (CSAID). SB203580 is an inhibitor of MAPK14. Functionally, serine/threonine kinase which acts as an essential component of the MAP kinase signal transduction pathway. MAPK14 is one of the four p38 MAPKs which play an important role in the cascades of cellular responses evoked by extracellular stimuli such as pro-inflammatory cytokines or physical stress leading to direct activation of transcription factors. Accordingly, p38 MAPKs phosphorylate a broad range of proteins and it has been estimated that they may have approximately 200 to 300 substrates each. Some of the targets are downstream kinases which are activated through phosphorylation and further phosphorylate additional targets. RPS6KA5/MSK1 and RPS6KA4/MSK2 can directly phosphorylate and activate transcription factors such as CREB1, ATF1, the NF-kappa-B isoform RELA/NFKB3, STAT1 and STAT3, but can also phosphorylate histone H3 and the nucleosomal protein HMGN1. RPS6KA5/MSK1 and RPS6KA4/MSK2 play important roles in the rapid induction of immediate-early genes in response to stress or mitogenic stimuli, either by inducing chromatin remodeling or by recruiting the transcription machinery. On the other hand, two other kinase targets, MAPKAPK2/MK2 and MAPKAPK3/MK3, participate in the control of gene expression mostly at the post-transcriptional level, by phosphorylating ZFP36 (tristetraprolin) and ELAVL1, and by regulating EEF2K, which is important for the elongation of mRNA during translation. MKNK1/MNK1 and MKNK2/MNK2, two other kinases activated by p38 MAPKs, regulate protein synthesis by phosphorylating the initiation factor EIF4E2. MAPK14 also interacts with casein kinase II, leading to its activation through autophosphorylation and further phosphorylation of TP53/p53. In the cytoplasm, the p38 MAPK pathway is an important regulator of protein turnover. For example, CFLAR is an inhibitor of TNF-induced apoptosis whose proteasome-mediated degradation is regulated by p38 MAPK phosphorylation. In a similar way, MAPK14 phosphorylates the ubiquitin ligase SIAH2, regulating its activity towards EGLN3. MAPK14 may also inhibit the lysosomal degradation pathway of autophagy by interfering with the intracellular trafficking of the transmembrane protein ATG9. Another function of MAPK14 is to regulate the endocytosis of membrane receptors by different mechanisms that impinge on the small GTPase RAB5A. In addition, clathrin-mediated EGFR internalization induced by inflammatory cytokines and UV irradiation depends on MAPK14-mediated phosphorylation of EGFR itself as well as of RAB5A effectors. Ectodomain shedding of transmembrane proteins is regulated by p38 MAPKs as well. In response to inflammatory stimuli, p38 MAPKs phosphorylate the membrane-associated metalloprotease ADAM17. Such phosphorylation is required for ADAM17-mediated ectodomain shedding of TGF-alpha family ligands, which results in the activation of EGFR signaling and cell proliferation. Another p38 MAPK substrate is FGFR1. FGFR1 can be translocated from the extracellular space into the cytosol and nucleus of target cells, and regulates processes such as rRNA synthesis and cell growth. FGFR1 translocation requires p38 MAPK activation. In the nucleus, many transcription factors are phosphorylated and activated by p38 MAPKs in response to different stimuli. Classical examples include ATF1, ATF2, ATF6, ELK1, PTPRH, DDIT3, TP53/p53 and MEF2C and MEF2A. The p38 MAPKs are emerging as important modulators of gene expression by regulating chromatin modifiers and remodelers. The promoters of several genes involved in the inflammatory response, such as IL6, IL8 and IL12B, display a p38 MAPK-dependent enrichment of histone H3 phosphorylation on 'Ser-10' (H3S10ph) in LPS-stimulated myeloid cells. This phosphorylation enhances the accessibility of the cryptic NF-kappa-B-binding sites marking promoters for increased NF-kappa-B recruitment. Phosphorylates CDC25B and CDC25C which is required for binding to 14-3-3 proteins and leads to initiation of a G2 delay after ultraviolet radiation. Phosphorylates TIAR following DNA damage, releasing TIAR from GADD45A mRNA and preventing mRNA degradation. The p38 MAPKs may also have kinase-independent roles, which are thought to be due to the binding to targets in the absence of phosphorylation. Protein O-Glc-N-acylation catalyzed by the OGT is regulated by MAPK14, and, although OGT does not seem to be phosphorylated by MAPK14, their interaction increases upon MAPK14 activation induced by glucose deprivation. This interaction may regulate OGT activity by recruiting it to specific targets such as neurofilament H, stimulating its O-Glc-N-acylation. Required in mid-fetal development for the growth of embryo-derived blood vessels in the labyrinth layer of the placenta. Also plays an essential role in developmental and stress-induced erythropoiesis, through regulation of EPO gene expression. Phosphorylates S100A9 at 'Thr-113'. This chain is Mitogen-activated protein kinase 14, found in Rattus norvegicus (Rat).